Reading from the N-terminus, the 261-residue chain is MSRKPLIAGNWKMNLNHYEAIALVQKIAFSLPDKYYDRVDVAVIPPFTDLRSVQTLVDGDKLRLTYGAQDLSPHDSGAYTGDVSGAFLAKLGCSYVVVGHSERRTYHNEDDALVAAKAATALKHGLTPIVCIGEHLDVREAGNHVAHNIEQLRGSLAGLLAEQIGSVVTAYEPVWAIGTGRVASAADAQEVCAAIRKELASLASPRIADTVRVLYGGSVNAKNVGDIVAQDDVDGGLVGGASLDGEHFATLAAIAAGGPLP.

10–12 serves as a coordination point for substrate; it reads NWK. His-100 acts as the Electrophile in catalysis. Glu-172 acts as the Proton acceptor in catalysis. Residues Gly-178, Ser-218, and 239 to 240 each bind substrate; that span reads GG.

It belongs to the triosephosphate isomerase family. As to quaternary structure, homodimer.

The protein localises to the cytoplasm. It carries out the reaction D-glyceraldehyde 3-phosphate = dihydroxyacetone phosphate. It functions in the pathway carbohydrate biosynthesis; gluconeogenesis. Its pathway is carbohydrate degradation; glycolysis; D-glyceraldehyde 3-phosphate from glycerone phosphate: step 1/1. Its function is as follows. Involved in the gluconeogenesis. Catalyzes stereospecifically the conversion of dihydroxyacetone phosphate (DHAP) to D-glyceraldehyde-3-phosphate (G3P). The chain is Triosephosphate isomerase from Mycobacterium bovis (strain BCG / Pasteur 1173P2).